Consider the following 309-residue polypeptide: Glutaminase 2 (309 aa).

Serine 65, asparagine 117, glutamate 162, asparagine 169, tyrosine 193, tyrosine 245, and valine 263 together coordinate substrate.

The protein belongs to the glutaminase family. In terms of assembly, homotetramer.

It carries out the reaction L-glutamine + H2O = L-glutamate + NH4(+). The sequence is that of Glutaminase 2 from Bacillus subtilis (strain 168).